The primary structure comprises 87 residues: RNA-binding protein Hfq (87 aa).

The Sm domain occupies 9–68 (DPFLNALRRERIPVSIFLVNGIKLQGKIQSFDQFVILLENTVNQMVYKHAISTVVPARAV).

The protein belongs to the Hfq family. In terms of assembly, homohexamer.

Its function is as follows. RNA chaperone that binds small regulatory RNA (sRNAs) and mRNAs to facilitate mRNA translational regulation in response to envelope stress, environmental stress and changes in metabolite concentrations. Also binds with high specificity to tRNAs. This Pseudoalteromonas translucida (strain TAC 125) protein is RNA-binding protein Hfq.